Here is a 176-residue protein sequence, read N- to C-terminus: Probable fimbrial subunit LpfE (176 aa).

The first 23 residues, 1-23 (MKFKRLLHSGIASLSLVACGVNA), serve as a signal peptide directing secretion.

This sequence belongs to the fimbrial protein family.

Its subcellular location is the fimbrium. Its function is as follows. Part of the lpfABCC'DE fimbrial operon. LP fimbriae may participate in the interaction with eukaryotic cells by assisting in microcolony formation. This is Probable fimbrial subunit LpfE (lpfE) from Escherichia coli O157:H7.